A 154-amino-acid chain; its full sequence is Ribonuclease H (154 aa).

An RNase H type-1 domain is found at 5-146 (EQNIVYLYCD…ADELANRGID (142 aa)). Residues Asp-14, Glu-52, Asp-74, and Asp-138 each contribute to the Mg(2+) site.

The protein belongs to the RNase H family. In terms of assembly, monomer. The cofactor is Mg(2+).

It localises to the cytoplasm. The catalysed reaction is Endonucleolytic cleavage to 5'-phosphomonoester.. Its function is as follows. Endonuclease that specifically degrades the RNA of RNA-DNA hybrids. The polypeptide is Ribonuclease H (Coxiella burnetii (strain RSA 331 / Henzerling II)).